The sequence spans 184 residues: Large ribosomal subunit protein uL15 (184 aa).

The segment at 1–45 is disordered; that stretch reads MDLSSLRPAKGAVKNKKRVGRGQGSGNGTTAGKGNNGQQSRSGYK. The segment covering 21 to 35 has biased composition (gly residues); that stretch reads RGQGSGNGTTAGKGN.

Belongs to the universal ribosomal protein uL15 family. As to quaternary structure, part of the 50S ribosomal subunit.

Its function is as follows. Binds to the 23S rRNA. This chain is Large ribosomal subunit protein uL15, found in Pelodictyon phaeoclathratiforme (strain DSM 5477 / BU-1).